The following is a 120-amino-acid chain: UPF0102 protein Caur_2698 (120 aa).

Belongs to the UPF0102 family.

This Chloroflexus aurantiacus (strain ATCC 29366 / DSM 635 / J-10-fl) protein is UPF0102 protein Caur_2698.